Consider the following 244-residue polypeptide: 1-(5-phosphoribosyl)-5-[(5-phosphoribosylamino)methylideneamino] imidazole-4-carboxamide isomerase (244 aa).

Asp-10 serves as the catalytic Proton acceptor. Residue Asp-132 is the Proton donor of the active site.

It belongs to the HisA/HisF family.

It localises to the cytoplasm. The enzyme catalyses 1-(5-phospho-beta-D-ribosyl)-5-[(5-phospho-beta-D-ribosylamino)methylideneamino]imidazole-4-carboxamide = 5-[(5-phospho-1-deoxy-D-ribulos-1-ylimino)methylamino]-1-(5-phospho-beta-D-ribosyl)imidazole-4-carboxamide. Its pathway is amino-acid biosynthesis; L-histidine biosynthesis; L-histidine from 5-phospho-alpha-D-ribose 1-diphosphate: step 4/9. The protein is 1-(5-phosphoribosyl)-5-[(5-phosphoribosylamino)methylideneamino] imidazole-4-carboxamide isomerase of Stenotrophomonas maltophilia (strain K279a).